Consider the following 96-residue polypeptide: Conantokin Rl-C (96 aa).

The signal sequence occupies residues 1–21; that stretch reads MQLYTYLYLLVPLVTFHLILG. Residues 22-78 constitute a propeptide that is removed on maturation; that stretch reads TGTLDHGDALTERRSADATALKPEPVLLQKSSARSTDDNGKDTQMKRIFKKRRNKAR. The segment at 36-85 is disordered; it reads SADATALKPEPVLLQKSSARSTDDNGKDTQMKRIFKKRRNKARGEEELSE. Residues 56–66 are compositionally biased toward basic and acidic residues; sequence STDDNGKDTQM. Glutamate 81 contributes to the a divalent metal cation binding site. 4-carboxyglutamate is present on residues glutamate 81, glutamate 82, glutamate 85, glutamate 89, and glutamate 93. Glutamate 85, glutamate 89, and glutamate 93 together coordinate a divalent metal cation. The residue at position 96 (asparagine 96) is an Asparagine amide.

This sequence belongs to the conotoxin B superfamily. Ca(2+) is required as a cofactor. It depends on Mg(2+) as a cofactor. As to expression, expressed by the venom duct.

It is found in the secreted. Functionally, conantokins inhibit N-methyl-D-aspartate (NMDA) receptors. This toxin has antagonist activity on NR2B/GRIN2B (IC(50)=1.4 uM) and NR2A/GRIN2A (IC(50)=2.9 uM) subunits, when tested on rat receptors. This chain is Conantokin Rl-C, found in Conus rolani (Cone snail).